We begin with the raw amino-acid sequence, 342 residues long: MKIRENIENFERIKLNKVAKFSDESVGRERLEEPDEIRTCFMVDRDRIIHSKSFRRLKRKTQVFIRTYGDHYRTRLVHTLEVSQVARTIGVALSLNEYLIEAIALGHDLGHAAFAHIGEDVLNDFLPGGFKHNEQSVRVAKKIEKNGLGLNLTKEVLDGILNHSGFSNVSKVAGTFEGQVVRFADKIAYVNHDIDDSIRAGILKEEDLPKNIIEILGASGSERINTLVKDCVFNTIDNIDKGEPRVSLSKEIGDAFVQLRKFLFDNIYLGKYLEDERKKAEFILEKVIEYYYNNWGEMPELYRNICEEEGIHRGVTDYIAGMTDDYCTNEFNKIYIPKFVMY.

The region spanning 75–190 is the HD domain; sequence RLVHTLEVSQ…VRFADKIAYV (116 aa).

This sequence belongs to the dGTPase family. Type 2 subfamily.

The chain is Deoxyguanosinetriphosphate triphosphohydrolase-like protein from Clostridium perfringens (strain SM101 / Type A).